A 128-amino-acid polypeptide reads, in one-letter code: S-adenosylmethionine decarboxylase proenzyme (128 aa).

Ser63 serves as the catalytic Schiff-base intermediate with substrate; via pyruvic acid. Residue Ser63 is modified to Pyruvic acid (Ser); by autocatalysis. His68 functions as the Proton acceptor; for processing activity in the catalytic mechanism. Catalysis depends on Cys83, which acts as the Proton donor; for catalytic activity.

The protein belongs to the prokaryotic AdoMetDC family. Type 1 subfamily. Heterotetramer of two alpha and two beta chains arranged as a dimer of alpha/beta heterodimers. The cofactor is pyruvate. Is synthesized initially as an inactive proenzyme. Formation of the active enzyme involves a self-maturation process in which the active site pyruvoyl group is generated from an internal serine residue via an autocatalytic post-translational modification. Two non-identical subunits are generated from the proenzyme in this reaction, and the pyruvate is formed at the N-terminus of the alpha chain, which is derived from the carboxyl end of the proenzyme. The post-translation cleavage follows an unusual pathway, termed non-hydrolytic serinolysis, in which the side chain hydroxyl group of the serine supplies its oxygen atom to form the C-terminus of the beta chain, while the remainder of the serine residue undergoes an oxidative deamination to produce ammonia and the pyruvoyl group blocking the N-terminus of the alpha chain.

The catalysed reaction is S-adenosyl-L-methionine + H(+) = S-adenosyl 3-(methylsulfanyl)propylamine + CO2. The protein operates within amine and polyamine biosynthesis; S-adenosylmethioninamine biosynthesis; S-adenosylmethioninamine from S-adenosyl-L-methionine: step 1/1. Catalyzes the decarboxylation of S-adenosylmethionine to S-adenosylmethioninamine (dcAdoMet), the propylamine donor required for the synthesis of the polyamines spermine and spermidine from the diamine putrescine. The protein is S-adenosylmethionine decarboxylase proenzyme of Leptospira borgpetersenii serovar Hardjo-bovis (strain JB197).